The chain runs to 551 residues: Podocalyxin (551 aa).

An N-terminal signal peptide occupies residues 1-21 (MRSALALAALLLLLLSPPSLS). The disordered stretch occupies residues 18–324 (PSLSQEKSPQ…QRVSCGPPER (307 aa)). Topologically, residues 22-452 (QEKSPQPGPT…PPEETEDRFS (431 aa)) are extracellular. The segment covering 32–59 (PMATSTSTRPAPASAPAPKSSVAASVPA) has biased composition (low complexity). The segment covering 60 to 90 (EQNTTPMTTKAPATQSPSASPGSSVENSAPA) has biased composition (polar residues). Low complexity predominate over residues 91-104 (QGSTTTQQSLSVTT). The span at 142-164 (APSNHSITTKPLATEATSQAPRQ) shows a compositional bias: polar residues. N145 and N180 each carry an N-linked (GlcNAc...) asparagine glycan. Positions 234–244 (PVASSAETQGM) are enriched in polar residues. Over residues 289-300 (TSSSTELASTAL) the composition is skewed to low complexity. Residue N333 is glycosylated (N-linked (GlcNAc...) asparagine). Residues 453–473 (LPLIITIVCMASFLLLVAALY) form a helical membrane-spanning segment. Residues 474–551 (GCCHQRLSHR…DLDEEEDTHL (78 aa)) are Cytoplasmic-facing. Phosphothreonine is present on T511. S530 carries the phosphoserine modification. T549 carries the phosphothreonine modification.

This sequence belongs to the podocalyxin family. As to quaternary structure, monomer; when associated with the membrane raft. Oligomer; when integrated in the apical membrane. Found in a complex with EZR, PODXL and NHERF2. Associates with the actin cytoskeleton through complex formation with EZR and NHERF2. Interacts (via the C-terminal PDZ-binding motif DTHL) with NHERF1 (via the PDZ domains); interaction is not detected in glomerular epithelium cells, take place early in the secretory pathway and is necessary for its apical membrane sorting. Interacts (via the C-terminal PDZ-binding motif DTHL) with NHERF2 (via the PDZ 1 domain); interaction is detected in glomerular epithelium cells. Interacts with EZR. N- and O-linked glycosylated. Sialoglycoprotein. Glomerular epithelium cell (podocyte) and endothelial cells.

Its subcellular location is the apical cell membrane. It is found in the cell projection. The protein localises to the microvillus. It localises to the membrane raft. The protein resides in the lamellipodium. Its subcellular location is the filopodium. It is found in the ruffle. The protein localises to the membrane. In terms of biological role, involved in the regulation of both adhesion and cell morphology and cancer progression. Functions as an anti-adhesive molecule that maintains an open filtration pathway between neighboring foot processes in the podocyte by charge repulsion. Acts as a pro-adhesive molecule, enhancing the adherence of cells to immobilized ligands, increasing the rate of migration and cell-cell contacts in an integrin-dependent manner. Induces the formation of apical actin-dependent microvilli. Involved in the formation of a preapical plasma membrane subdomain to set up initial epithelial polarization and the apical lumen formation during renal tubulogenesis. Plays a role in cancer development and aggressiveness by inducing cell migration and invasion through its interaction with the actin-binding protein EZR. Affects EZR-dependent signaling events, leading to increased activities of the MAPK and PI3K pathways in cancer cells. The sequence is that of Podocalyxin (PODXL) from Oryctolagus cuniculus (Rabbit).